The following is a 230-amino-acid chain: DNA ADP-ribosyl transferase (230 aa).

The 205-residue stretch at 26–230 folds into the DarT domain; sequence WIVWHFTHAD…KYVIKPGMYY (205 aa). Residues 30 to 32, Gly-39, Leu-47, and Arg-67 contribute to the NAD(+) site; that span reads HFT. The active-site Proton acceptor is the Arg-67. Glu-183 is a catalytic residue.

It belongs to the DarT ADP-ribosyltransferase family. As to quaternary structure, interacts with cognate antitoxin DarG (via C-terminus); this heterodimeric complex neutralizes the toxic effect of DarT by preventing ssDNA binding to DarT and consequently inactivating the toxin by direct protein-protein interactions.

It carries out the reaction a thymidine in DNA + NAD(+) = an N-(ADP-alpha-D-ribosyl)-thymidine in DNA + nicotinamide + H(+). In terms of biological role, toxic component of the hybrid type II/IV toxin-antitoxin (TA) system DarTG, which plays a crucial role in controlling bacterial growth and bacteriophage infection. ADP-ribosylates ssDNA, preferentially in the motif TTTW. In case of phage infection, DarT toxin ADP-ribosylates DNA, which inhibits both viral DNA and RNA synthesis and leads to abortive infection. Its toxic effect is neutralized by cognate antitoxin DarG. The sequence is that of DNA ADP-ribosyl transferase from Mycobacterium bovis (strain BCG / Pasteur 1173P2).